A 192-amino-acid polypeptide reads, in one-letter code: Protein A16 (192 aa).

An N-terminal signal peptide occupies residues 1 to 22 (MLLANTAAAVLLLIVCIGASVG). The C-type lectin domain occupies 71-186 (KNKKFTIGTL…CLNPLNIFPY (116 aa)). Residues cysteine 163 and cysteine 177 are joined by a disulfide bond.

In terms of tissue distribution, expressed in the gut of adults.

The chain is Protein A16 (CTL3) from Anopheles gambiae (African malaria mosquito).